A 159-amino-acid chain; its full sequence is NADH-quinone oxidoreductase subunit I (159 aa).

2 4Fe-4S ferredoxin-type domains span residues 51–80 and 90–119; these read RRYE…IEAD and TRYD…EGPN. Residues Cys-60, Cys-63, Cys-66, Cys-70, Cys-99, Cys-102, Cys-105, and Cys-109 each coordinate [4Fe-4S] cluster.

The protein belongs to the complex I 23 kDa subunit family. In terms of assembly, NDH-1 is composed of 14 different subunits. Subunits NuoA, H, J, K, L, M, N constitute the membrane sector of the complex. The cofactor is [4Fe-4S] cluster.

The protein resides in the cell inner membrane. It carries out the reaction a quinone + NADH + 5 H(+)(in) = a quinol + NAD(+) + 4 H(+)(out). Functionally, NDH-1 shuttles electrons from NADH, via FMN and iron-sulfur (Fe-S) centers, to quinones in the respiratory chain. The immediate electron acceptor for the enzyme in this species is believed to be ubiquinone. Couples the redox reaction to proton translocation (for every two electrons transferred, four hydrogen ions are translocated across the cytoplasmic membrane), and thus conserves the redox energy in a proton gradient. The protein is NADH-quinone oxidoreductase subunit I of Rickettsia bellii (strain OSU 85-389).